A 629-amino-acid chain; its full sequence is (-)-alpha-pinene synthase, chloroplastic (629 aa).

The transit peptide at 1-48 directs the protein to the chloroplast; it reads MSPVSVISLPSDLCLPTSFIDRSGRELIPLHITIPNVAMRRQGKLMTR. Residues D380, D384, and D532 each coordinate Mg(2+). Residues 380 to 384 carry the DDXXD motif motif; that stretch reads DDMYD. S540 contacts K(+).

It belongs to the terpene synthase family. Tpsd subfamily. Requires Mg(2+) as cofactor. The cofactor is Mn(2+). It depends on K(+) as a cofactor.

Its subcellular location is the plastid. The protein resides in the chloroplast. The enzyme catalyses (2E)-geranyl diphosphate = (1S,5S)-alpha-pinene + diphosphate. Its pathway is terpene metabolism; oleoresin biosynthesis. Functionally, involved in defensive oleoresin formation in conifers in response to insect attack or other injury. Involved in monoterpene (C10) olefins biosynthesis. Produces mainly (-)-alpha-pinene (79%) and lesser amounts of (-)-beta-pinene (4.2%), nearly racemic mixtures of camphene (2.8% (+)/2.2% (-)) and limonene (2.4% (+)/3.7% (-)), as well as small amounts of (+)-alpha-pinene (3.3%) and (+)-beta-pinene (2.4%). The protein is (-)-alpha-pinene synthase, chloroplastic (PT1) of Pinus taeda (Loblolly pine).